A 590-amino-acid polypeptide reads, in one-letter code: Myo-inositol transporter 3A (590 aa).

Residues 1–57 (MSATHIENRDDSFLENKGIDHIGRPENNNGSQEPPSPSGFGGHLIDENLVRVEGEDK) lie on the Cytoplasmic side of the membrane. Over residues 15–24 (ENKGIDHIGR) the composition is skewed to basic and acidic residues. The tract at residues 15–40 (ENKGIDHIGRPENNNGSQEPPSPSGF) is disordered. A helical membrane pass occupies residues 58-78 (VTWYLCFLISASAIAGFLFGY). The Extracellular segment spans residues 79–105 (DTGVVGVALPLVGTDLGGSALNSSQQE). N-linked (GlcNAc...) asparagine glycosylation is present at N100. A helical membrane pass occupies residues 106–126 (IITAGTTIGAIFGSAILGGWG). The Cytoplasmic segment spans residues 127 to 132 (DRLGRK). A helical membrane pass occupies residues 133–153 (GAILVSDVFFTIGAVIIASSY). Topologically, residues 154 to 157 (SVPQ) are extracellular. A helical transmembrane segment spans residues 158-178 (IIVGRIILGIGVGGAAVIAPL). The Cytoplasmic segment spans residues 179–192 (FITETAPTAVRGRC). Residues 193–213 (IGVNAFFIPFGQVVSDAIGAG) traverse the membrane as a helical segment. Residues 214 to 222 (VQNMHNGWR) lie on the Extracellular side of the membrane. The chain crosses the membrane as a helical span at residues 223-243 (LLFALGAVPSLLQLLLFHYLP). Topologically, residues 244 to 325 (ESPRILILKG…AVSALQAAGQ (82 aa)) are cytoplasmic. A helical membrane pass occupies residues 326 to 346 (LTGFNTLLYYAGTLFGLLGLS). At 347–349 (NPA) the chain is on the extracellular side. The helical transmembrane segment at 350-370 (LGGLIPAGTNAVFVLIGMSLV) threads the bilayer. At 371 to 376 (DKVGRR) the chain is on the cytoplasmic side. The helical transmembrane segment at 377 to 397 (GLLLIGVPIMLLGHVWNIVSF) threads the bilayer. Topologically, residues 398–420 (YYMCKPTGGFLDTSYSYDTTDVG) are extracellular. A helical transmembrane segment spans residues 421–441 (IVIGGIVFFVVGYGLTYSHLV). The Cytoplasmic segment spans residues 442–455 (WYQAEYLTLEVRSM). Residues 456–476 (GSGIATTVCWIANLVVSVSYL) traverse the membrane as a helical segment. At 477 to 485 (SELETMTPS) the chain is on the extracellular side. The helical transmembrane segment at 486 to 506 (GTYGFYFGISVIGFVFLVFCL) threads the bilayer. Over 507–590 (PETKQLSIDE…GGKRTPSASV (84 aa)) the chain is Cytoplasmic.

The protein belongs to the major facilitator superfamily. Sugar transporter (TC 2.A.1.1) family.

The protein localises to the cell membrane. It catalyses the reaction myo-inositol(out) + H(+)(out) = myo-inositol(in) + H(+)(in). Its function is as follows. Transporter for myo-inositol. The polypeptide is Myo-inositol transporter 3A (ITR3A) (Cryptococcus neoformans var. grubii serotype A (strain H99 / ATCC 208821 / CBS 10515 / FGSC 9487) (Filobasidiella neoformans var. grubii)).